The following is a 447-amino-acid chain: Serine/threonine-protein phosphatase 2A 55 kDa regulatory subunit B delta isoform (447 aa).

7 WD repeats span residues 26-65 (AEAD…KSRP), 91-132 (EIEE…KRVE), 175-213 (AHTY…RSFN), 224-264 (ELTE…LCDR), 283-321 (EIIS…RPVE), 338-379 (ENDC…DITL), and 414-447 (DFNK…DKVN).

It belongs to the phosphatase 2A regulatory subunit B family. PP2A consists of a common heterodimeric core enzyme, composed of a 36 kDa catalytic subunit (subunit C) and a 65 kDa constant regulatory subunit (PR65 or subunit A), that associates with a variety of regulatory subunits. Proteins that associate with the core dimer include three families of regulatory subunits B (the R2/B/PR55/B55, R3/B''/PR72/PR130/PR59 and R5/B'/B56 families), the 48 kDa variable regulatory subunit, viral proteins, and cell signaling molecules. Interacts with ensa (when phosphorylated at 'Ser-67') and arpp19 (when phosphorylated at 'Ser-67'), leading to inhibit PP2A activity.

The protein localises to the cytoplasm. Its function is as follows. Substrate-recognition subunit of protein phosphatase 2A (PP2A) that plays a key role in cell cycle by controlling mitosis entry and exit. The activity of PP2A complexes containing ppp2r2d (PR55-delta) fluctuate during the cell cycle: the activity is high in interphase and low in mitosis. During mitosis, activity of PP2A is inhibited via interaction with phosphorylated ensa and arpp19 inhibitors. PP2A complexes containing ppp2r2d (PR55-delta) also regulate the activity of TGF-beta/Activin/Nodal signaling by restricting receptor activity. Within the PP2A complexes, the B regulatory subunits modulate substrate selectivity and catalytic activity, and may also direct the localization of the catalytic enzyme to a particular subcellular compartment. This Xenopus laevis (African clawed frog) protein is Serine/threonine-protein phosphatase 2A 55 kDa regulatory subunit B delta isoform (ppp2r2d).